We begin with the raw amino-acid sequence, 162 residues long: Protein NrdI (162 aa).

This sequence belongs to the NrdI family.

In terms of biological role, probably involved in ribonucleotide reductase function. The sequence is that of Protein NrdI from Streptococcus pyogenes serotype M1.